A 368-amino-acid chain; its full sequence is Spermidine/putrescine import ATP-binding protein PotA (368 aa).

Residues 8–238 enclose the ABC transporter domain; sequence IELRGVTKNF…PANLYVARFV (231 aa). 40–47 contacts ATP; that stretch reads GPSGCGKT.

It belongs to the ABC transporter superfamily. Spermidine/putrescine importer (TC 3.A.1.11.1) family. The complex is composed of two ATP-binding proteins (PotA), two transmembrane proteins (PotB and PotC) and a solute-binding protein (PotD).

The protein resides in the cell inner membrane. The catalysed reaction is ATP + H2O + polyamine-[polyamine-binding protein]Side 1 = ADP + phosphate + polyamineSide 2 + [polyamine-binding protein]Side 1.. Its function is as follows. Part of the ABC transporter complex PotABCD involved in spermidine/putrescine import. Responsible for energy coupling to the transport system. In Nitratidesulfovibrio vulgaris (strain ATCC 29579 / DSM 644 / CCUG 34227 / NCIMB 8303 / VKM B-1760 / Hildenborough) (Desulfovibrio vulgaris), this protein is Spermidine/putrescine import ATP-binding protein PotA.